A 213-amino-acid chain; its full sequence is Charged multivesicular body protein 2b (213 aa).

Position 2 is an N-acetylalanine (alanine 2). Residues 25-55 adopt a coiled-coil conformation; sequence QRAIIRDRAALEKQEKQLELEIKKMAKIGNK. Positions 179–194 are enriched in low complexity; that stretch reads AKAPSAARSLPSASTS. Residues 179-199 form a disordered region; sequence AKAPSAARSLPSASTSKATIS. Serine 199 bears the Phosphoserine mark. The MIT-interacting motif signature appears at 201 to 211; it reads EEIERQLKALG.

This sequence belongs to the SNF7 family. In terms of assembly, probable core component of the endosomal sorting required for transport complex III (ESCRT-III). ESCRT-III components are thought to multimerize to form a flat lattice on the perimeter membrane of the endosome. Several assembly forms of ESCRT-III may exist that interact and act sequentially. Interacts with CHMP2A. Interacts with VPS4A. Interacts with VPS4B; the interaction is direct. As to expression, widely expressed. Expressed in brain, heart, skeletal muscle, spleen, kidney, liver, small intestine, pancreas, lung, placenta and leukocytes. In brain, it is expressed in cerebellum, cerebral cortex, medulla, spinal cord, occipital lobe, frontal lobe, temporal lobe and putamen.

It is found in the cytoplasm. Its subcellular location is the cytosol. It localises to the late endosome membrane. Functionally, probable core component of the endosomal sorting required for transport complex III (ESCRT-III) which is involved in multivesicular bodies (MVBs) formation and sorting of endosomal cargo proteins into MVBs. MVBs contain intraluminal vesicles (ILVs) that are generated by invagination and scission from the limiting membrane of the endosome and mostly are delivered to lysosomes enabling degradation of membrane proteins, such as stimulated growth factor receptors, lysosomal enzymes and lipids. The MVB pathway appears to require the sequential function of ESCRT-O, -I,-II and -III complexes. ESCRT-III proteins mostly dissociate from the invaginating membrane before the ILV is released. The ESCRT machinery also functions in topologically equivalent membrane fission events, such as the terminal stages of cytokinesis and the budding of enveloped viruses (HIV-1 and other lentiviruses). ESCRT-III proteins are believed to mediate the necessary vesicle extrusion and/or membrane fission activities, possibly in conjunction with the AAA ATPase VPS4. The polypeptide is Charged multivesicular body protein 2b (CHMP2B) (Homo sapiens (Human)).